Consider the following 299-residue polypeptide: tRNA dimethylallyltransferase (299 aa).

ATP is bound at residue Gly-11–Thr-18. Residue Thr-13–Thr-18 participates in substrate binding. Residues Asp-36–Gln-39 form an interaction with substrate tRNA region.

The protein belongs to the IPP transferase family. In terms of assembly, monomer. Mg(2+) serves as cofactor.

It carries out the reaction adenosine(37) in tRNA + dimethylallyl diphosphate = N(6)-dimethylallyladenosine(37) in tRNA + diphosphate. Catalyzes the transfer of a dimethylallyl group onto the adenine at position 37 in tRNAs that read codons beginning with uridine, leading to the formation of N6-(dimethylallyl)adenosine (i(6)A). This is tRNA dimethylallyltransferase from Streptococcus pyogenes serotype M1.